A 551-amino-acid chain; its full sequence is ATP synthase subunit alpha (551 aa).

ATP is bound at residue 174–181; sequence GDRQTGKT.

The protein belongs to the ATPase alpha/beta chains family. F-type ATPases have 2 components, CF(1) - the catalytic core - and CF(0) - the membrane proton channel. CF(1) has five subunits: alpha(3), beta(3), gamma(1), delta(1), epsilon(1). CF(0) has three main subunits: a(1), b(2) and c(9-12). The alpha and beta chains form an alternating ring which encloses part of the gamma chain. CF(1) is attached to CF(0) by a central stalk formed by the gamma and epsilon chains, while a peripheral stalk is formed by the delta and b chains.

It localises to the cell inner membrane. The catalysed reaction is ATP + H2O + 4 H(+)(in) = ADP + phosphate + 5 H(+)(out). Produces ATP from ADP in the presence of a proton gradient across the membrane. The alpha chain is a regulatory subunit. The sequence is that of ATP synthase subunit alpha from Salinibacter ruber (strain DSM 13855 / M31).